The following is a 95-amino-acid chain: Lipolysis-activating peptide 1-beta chain (95 aa).

The signal sequence occupies residues 1-22; sequence MISVQVIFIAFISIIAFSMVCG. Residues 23 to 91 enclose the LCN-type CS-alpha/beta domain; the sequence is GNVFPNRELG…FLNALEKQCP (69 aa). Disulfide bonds link cysteine 37-cysteine 60, cysteine 45-cysteine 70, and cysteine 49-cysteine 72.

As to quaternary structure, homodimer; disulfide-linked or monomer (edited version) or heterodimer of an alpha chain (AC P84810) and this beta chain (non-edited version). Expressed by the venom gland.

The protein localises to the secreted. Its function is as follows. The homodimer inhibits HMG-CoA reductase (HMGCR) (32% of inhibition produced by 0.6 uM), a glycoprotein involved in the control of cholesterol biosynthesis. The inhibitory effects of bumarsin are seen at much lower concentrations (0.6 uM) than that for statins such as atorvastatin (5 mM) and simvastatin (10 uM). In addition to inhibition of HMG-CoA reductase, this protein lowers cholesterol levels by inducing steroid hormone synthesis via StAR, and by increasing reverse cholesterol transport mediated by the induction of ABCA1 and APOA1. Functionally, the heterodimer non-edited LVP1 induces lipolysis in rat adipocytes. Induction of lipolysis by LVP1 appears to be mediated through the beta-2 adrenergic receptor pathway (ADRB2). Intracerebroventricular injection is not toxic to mice. In terms of biological role, the monomer edited version, similar to alpha-toxins, may modulate voltage-gated sodium channels (Nav) and may block voltage-gated potassium channels (Kv). This Buthus occitanus tunetanus (Common European scorpion) protein is Lipolysis-activating peptide 1-beta chain.